A 172-amino-acid chain; its full sequence is Disulfide bond formation protein B (172 aa).

Topologically, residues 1 to 16 (MNLFASLNQFSKNRIS) are cytoplasmic. The chain crosses the membrane as a helical span at residues 17-33 (WLLLLLFVVFFEGAALF). At 34–51 (FQHVMMLSPCVMCIYERV) the chain is on the periplasmic side. Cysteines 43 and 46 form a disulfide. Residues 52–67 (AMLGVGGAALFGLIAP) traverse the membrane as a helical segment. At 68–74 (NNPLVRW) the chain is on the cytoplasmic side. A helical transmembrane segment spans residues 75 to 92 (LGLAAWGASAYKGLALSL). The Periplasmic segment spans residues 93-147 (QHVDYQFNPSPFATCDLFVTFPDWAPLNQWAPWMFEAYGDCSKIVWQFMTLSMPQ). Cysteine 107 and cysteine 133 are oxidised to a cystine. Residues 148-166 (WLVIIFAGNLVALAFIVIA) traverse the membrane as a helical segment. At 167–172 (QFFKSK) the chain is on the cytoplasmic side.

Belongs to the DsbB family.

Its subcellular location is the cell inner membrane. Functionally, required for disulfide bond formation in some periplasmic proteins. Acts by oxidizing the DsbA protein. The sequence is that of Disulfide bond formation protein B from Vibrio vulnificus (strain CMCP6).